The primary structure comprises 306 residues: Methionyl-tRNA formyltransferase (306 aa).

110–113 (SLLP) is a binding site for (6S)-5,6,7,8-tetrahydrofolate.

It belongs to the Fmt family.

It catalyses the reaction L-methionyl-tRNA(fMet) + (6R)-10-formyltetrahydrofolate = N-formyl-L-methionyl-tRNA(fMet) + (6S)-5,6,7,8-tetrahydrofolate + H(+). Attaches a formyl group to the free amino group of methionyl-tRNA(fMet). The formyl group appears to play a dual role in the initiator identity of N-formylmethionyl-tRNA by promoting its recognition by IF2 and preventing the misappropriation of this tRNA by the elongation apparatus. The sequence is that of Methionyl-tRNA formyltransferase from Brucella melitensis biotype 2 (strain ATCC 23457).